A 635-amino-acid chain; its full sequence is Threonine--tRNA ligase (635 aa).

The 61-residue stretch at 1-61 (MIQITLPDNS…DHDARLQIIT (61 aa)) folds into the TGS domain. Residues 242–533 (DHRKLGKELD…LIEHHAGALP (292 aa)) are catalytic. Zn(2+) is bound by residues cysteine 333, histidine 384, and histidine 510.

It belongs to the class-II aminoacyl-tRNA synthetase family. As to quaternary structure, homodimer. Requires Zn(2+) as cofactor.

It is found in the cytoplasm. The enzyme catalyses tRNA(Thr) + L-threonine + ATP = L-threonyl-tRNA(Thr) + AMP + diphosphate + H(+). Catalyzes the attachment of threonine to tRNA(Thr) in a two-step reaction: L-threonine is first activated by ATP to form Thr-AMP and then transferred to the acceptor end of tRNA(Thr). Also edits incorrectly charged L-seryl-tRNA(Thr). The protein is Threonine--tRNA ligase of Variovorax paradoxus (strain S110).